The primary structure comprises 517 residues: Ribose import ATP-binding protein RbsA (517 aa).

ABC transporter domains follow at residues 11-251 (LEMR…VGRD) and 263-507 (YDPG…ALAT). ATP is bound at residue 43-50 (GENGAGKS).

It belongs to the ABC transporter superfamily. Ribose importer (TC 3.A.1.2.1) family. In terms of assembly, the complex is composed of an ATP-binding protein (RbsA), two transmembrane proteins (RbsC) and a solute-binding protein (RbsB).

It localises to the cell inner membrane. The catalysed reaction is D-ribose(out) + ATP + H2O = D-ribose(in) + ADP + phosphate + H(+). In terms of biological role, part of the ABC transporter complex RbsABC involved in ribose import. Responsible for energy coupling to the transport system. The chain is Ribose import ATP-binding protein RbsA from Burkholderia pseudomallei (strain K96243).